Here is a 228-residue protein sequence, read N- to C-terminus: Urease accessory protein UreH (228 aa).

Helical transmembrane passes span 48 to 68 (VFWG…IILM), 79 to 99 (SLEF…ILSL), 130 to 150 (LFIG…LTMS), 162 to 182 (ILFF…LIGI), and 196 to 216 (AFIQ…MYNL).

The protein belongs to the NiCoT transporter (TC 2.A.52) family.

Its subcellular location is the cell membrane. In terms of biological role, probably facilitates nickel incorporation. May constitute a multicomponent high-affinity nickel transporter. Not essential for the expression of catalytically active urease. In Bacillus sp. (strain TB-90), this protein is Urease accessory protein UreH (ureH).